The chain runs to 407 residues: MYLEYLQPKLNLMDESSTISKNFPDYSPNLNTPITSNFNEETGSDCSLVTPRIISSSNSNSNSNSNSNSNSNSGSIDENELNNSNSSSSSARQIRKKWKEPEDIAFITTIMNNSQLLTFVEYFKPMKNFWKKISKILFQQYGYERNSRQCHDRFKVLYTKSLKVHPSKKSKQKKKKSKQEAGSNLNFDPSKLSRMQYLLVQLQNTFSFVNGNIILKSQKTLKPNKNGTNDNINNHYYNNCNNNNNNINNSNNSNNNNSNNINRNSNHSTNVFSTPEHIQSSINLDKLESLPALDTKGEPSFISPAQFSLLSSAPADNLILQTPPSPFFQQTMPIQLPRDAQQEQISPVFSTDVIYMWQTMFNTIENLKEQVNCLKNEVKQLNHKFYQQNKPLHNMSTSDSENFMQQH.

Disordered regions lie at residues 51 to 94 (PRII…ARQI), 165 to 187 (HPSK…NLNF), and 241 to 273 (NNNN…NVFS). Positions 55-73 (SSSNSNSNSNSNSNSNSNS) are enriched in low complexity. One can recognise a Myb-like domain in the interval 90–158 (SARQIRKKWK…QCHDRFKVLY (69 aa)). Over residues 165–177 (HPSKKSKQKKKKS) the composition is skewed to basic residues. Residues 241 to 270 (NNNNNNINNSNNSNNNNSNNINRNSNHSTN) are compositionally biased toward low complexity.

It localises to the nucleus. Negative regulator of the Ras-cyclic AMP pathway. Negatively regulate the activity of normal but not mutationally activated Ras proteins. The down-regulatory effect of RPI1 requires the presence of one of the two Ras GTPase activators, IRA1 and IRA2. This Saccharomyces cerevisiae (strain ATCC 204508 / S288c) (Baker's yeast) protein is Negative RAS protein regulator protein (RPI1).